The chain runs to 645 residues: DNA ligase (645 aa).

Residues Asp30 to Asp34, Ser79 to Met80, and Glu106 each bind NAD(+). The N6-AMP-lysine intermediate role is filled by Lys108. Residues Arg129, Glu163, and Lys302 each contribute to the NAD(+) site. Zn(2+) is bound by residues Cys396, Cys399, Cys412, and Cys417. Residues Ile570–Leu645 form the BRCT domain.

Belongs to the NAD-dependent DNA ligase family. LigA subfamily. The cofactor is Mg(2+). Requires Mn(2+) as cofactor.

It catalyses the reaction NAD(+) + (deoxyribonucleotide)n-3'-hydroxyl + 5'-phospho-(deoxyribonucleotide)m = (deoxyribonucleotide)n+m + AMP + beta-nicotinamide D-nucleotide.. Its function is as follows. DNA ligase that catalyzes the formation of phosphodiester linkages between 5'-phosphoryl and 3'-hydroxyl groups in double-stranded DNA using NAD as a coenzyme and as the energy source for the reaction. It is essential for DNA replication and repair of damaged DNA. This is DNA ligase from Campylobacter hominis (strain ATCC BAA-381 / DSM 21671 / CCUG 45161 / LMG 19568 / NCTC 13146 / CH001A).